The following is a 280-amino-acid chain: Vitamin B12-binding protein (280 aa).

The first 27 residues, 1–27 (MMPLGLFPLPRAAVVLLISLLTLPAQA), serve as a signal peptide directing secretion. Positions 30–277 (RVISLSPSTT…QMASIPTPVA (248 aa)) constitute a Fe/B12 periplasmic-binding domain. Y57 is a cyanocob(III)alamin binding site. C190 and C266 form a disulfide bridge.

The protein belongs to the BtuF family. As to quaternary structure, the complex is composed of two ATP-binding proteins (BtuD), two transmembrane proteins (BtuC) and a solute-binding protein (BtuF).

It localises to the periplasm. Functionally, part of the ABC transporter complex BtuCDF involved in vitamin B12 import. Binds vitamin B12 and delivers it to the periplasmic surface of BtuC. This is Vitamin B12-binding protein from Yersinia pseudotuberculosis serotype O:1b (strain IP 31758).